The chain runs to 305 residues: Oxygen-dependent coproporphyrinogen-III oxidase (305 aa).

Residue serine 93 coordinates substrate. A divalent metal cation-binding residues include histidine 97 and histidine 107. The active-site Proton donor is histidine 107. 109 to 111 (NVR) lines the substrate pocket. A divalent metal cation-binding residues include histidine 146 and histidine 176. The interval 241-276 (YVEFNLVFDRGTLFGLQSGGRTESILMSLPPQVRWG) is important for dimerization. 259–261 (GGR) is a substrate binding site.

The protein belongs to the aerobic coproporphyrinogen-III oxidase family. Homodimer. The cofactor is a divalent metal cation.

It localises to the cytoplasm. The enzyme catalyses coproporphyrinogen III + O2 + 2 H(+) = protoporphyrinogen IX + 2 CO2 + 2 H2O. The protein operates within porphyrin-containing compound metabolism; protoporphyrin-IX biosynthesis; protoporphyrinogen-IX from coproporphyrinogen-III (O2 route): step 1/1. Its function is as follows. Involved in the heme biosynthesis. Catalyzes the aerobic oxidative decarboxylation of propionate groups of rings A and B of coproporphyrinogen-III to yield the vinyl groups in protoporphyrinogen-IX. This Pseudomonas aeruginosa (strain UCBPP-PA14) protein is Oxygen-dependent coproporphyrinogen-III oxidase.